The sequence spans 132 residues: Aspartate 1-decarboxylase (132 aa).

Residue Ser25 is the Schiff-base intermediate with substrate; via pyruvic acid of the active site. Pyruvic acid (Ser) is present on Ser25. A substrate-binding site is contributed by Thr57. Tyr58 serves as the catalytic Proton donor. Gly73–Ala75 provides a ligand contact to substrate.

The protein belongs to the PanD family. In terms of assembly, heterooctamer of four alpha and four beta subunits. Pyruvate is required as a cofactor. In terms of processing, is synthesized initially as an inactive proenzyme, which is activated by self-cleavage at a specific serine bond to produce a beta-subunit with a hydroxyl group at its C-terminus and an alpha-subunit with a pyruvoyl group at its N-terminus.

It is found in the cytoplasm. It catalyses the reaction L-aspartate + H(+) = beta-alanine + CO2. Its pathway is cofactor biosynthesis; (R)-pantothenate biosynthesis; beta-alanine from L-aspartate: step 1/1. In terms of biological role, catalyzes the pyruvoyl-dependent decarboxylation of aspartate to produce beta-alanine. This Geotalea uraniireducens (strain Rf4) (Geobacter uraniireducens) protein is Aspartate 1-decarboxylase.